A 577-amino-acid polypeptide reads, in one-letter code: 2-succinyl-5-enolpyruvyl-6-hydroxy-3-cyclohexene-1-carboxylate synthase (577 aa).

This sequence belongs to the TPP enzyme family. MenD subfamily. In terms of assembly, homodimer. It depends on Mg(2+) as a cofactor. The cofactor is Mn(2+). Requires thiamine diphosphate as cofactor.

It carries out the reaction isochorismate + 2-oxoglutarate + H(+) = 5-enolpyruvoyl-6-hydroxy-2-succinyl-cyclohex-3-ene-1-carboxylate + CO2. The protein operates within quinol/quinone metabolism; 1,4-dihydroxy-2-naphthoate biosynthesis; 1,4-dihydroxy-2-naphthoate from chorismate: step 2/7. Its pathway is quinol/quinone metabolism; menaquinone biosynthesis. Functionally, catalyzes the thiamine diphosphate-dependent decarboxylation of 2-oxoglutarate and the subsequent addition of the resulting succinic semialdehyde-thiamine pyrophosphate anion to isochorismate to yield 2-succinyl-5-enolpyruvyl-6-hydroxy-3-cyclohexene-1-carboxylate (SEPHCHC). This Porphyromonas gingivalis (strain ATCC BAA-308 / W83) protein is 2-succinyl-5-enolpyruvyl-6-hydroxy-3-cyclohexene-1-carboxylate synthase.